We begin with the raw amino-acid sequence, 129 residues long: Large ribosomal subunit protein uL22 (129 aa).

Belongs to the universal ribosomal protein uL22 family. In terms of assembly, part of the 50S ribosomal subunit.

This protein binds specifically to 23S rRNA; its binding is stimulated by other ribosomal proteins, e.g. L4, L17, and L20. It is important during the early stages of 50S assembly. It makes multiple contacts with different domains of the 23S rRNA in the assembled 50S subunit and ribosome. Functionally, the globular domain of the protein is located near the polypeptide exit tunnel on the outside of the subunit, while an extended beta-hairpin is found that lines the wall of the exit tunnel in the center of the 70S ribosome. The protein is Large ribosomal subunit protein uL22 of Mesorhizobium japonicum (strain LMG 29417 / CECT 9101 / MAFF 303099) (Mesorhizobium loti (strain MAFF 303099)).